Consider the following 103-residue polypeptide: Eukaryotic translation initiation factor 4E-1A-binding protein homolog (103 aa).

The tract at residues 49–103 is disordered; the sequence is NSPLSKTPPPQLAHITNTELNKKVEKSTTTPTTTTPPTTTAKPKPTNDDDIFPME. Residues 76-92 are compositionally biased toward low complexity; that stretch reads TTTPTTTTPPTTTAKPK.

This sequence belongs to the eIF4E-binding protein family.

In terms of biological role, regulates assembly of the eIF4F complex. The polypeptide is Eukaryotic translation initiation factor 4E-1A-binding protein homolog (febA) (Dictyostelium discoideum (Social amoeba)).